Here is a 314-residue protein sequence, read N- to C-terminus: tRNA dimethylallyltransferase (314 aa).

Gly11–Thr18 contacts ATP. Thr13–Thr18 lines the substrate pocket. Residues Asp36–Gln39 are interaction with substrate tRNA.

Belongs to the IPP transferase family. As to quaternary structure, monomer. The cofactor is Mg(2+).

It catalyses the reaction adenosine(37) in tRNA + dimethylallyl diphosphate = N(6)-dimethylallyladenosine(37) in tRNA + diphosphate. In terms of biological role, catalyzes the transfer of a dimethylallyl group onto the adenine at position 37 in tRNAs that read codons beginning with uridine, leading to the formation of N6-(dimethylallyl)adenosine (i(6)A). The protein is tRNA dimethylallyltransferase of Chlamydia trachomatis serovar D (strain ATCC VR-885 / DSM 19411 / UW-3/Cx).